Consider the following 701-residue polypeptide: ER-retained PMA1-suppressing protein 1 (701 aa).

Residues 1-27 (MKMNLKRLVVTFFSCITFLLKFTIAAA) form the signal peptide. The region spanning 28 to 142 (EPPEGFPEPL…LIAFARRESM (115 aa)) is the Thioredoxin 1 domain. Cysteine 60 and cysteine 63 are joined by a disulfide. Asparagine 85 carries N-linked (GlcNAc...) asparagine glycosylation. Residues cysteine 200 and cysteine 203 are joined by a disulfide bond. Asparagine 264, asparagine 299, and asparagine 370 each carry an N-linked (GlcNAc...) asparagine glycan. The Thioredoxin 2 domain occupies 408-446 (PTFFMFKDGDPISYVFPGYSTTEMRNIDAIMDWVKKYSN). A helical membrane pass occupies residues 646–666 (IIHGNGMPGYLIVIVLFIAIL).

The protein belongs to the protein disulfide isomerase family. Interacts with mutated PMA1-D378N but not wild type PMA1. Interacts with EUG1, KAR2, MPD1 and PDI1.

Its subcellular location is the endoplasmic reticulum membrane. It carries out the reaction Catalyzes the rearrangement of -S-S- bonds in proteins.. Its function is as follows. Acts as a membrane-bound chaperone in endoplasmic reticulum quality control. Probably facilitates presentation of substrate to membrane-bound components of the degradation machinery. The sequence is that of ER-retained PMA1-suppressing protein 1 (EPS1) from Saccharomyces cerevisiae (strain ATCC 204508 / S288c) (Baker's yeast).